A 39-amino-acid polypeptide reads, in one-letter code: Photosystem II reaction center protein L (39 aa).

A helical transmembrane segment spans residues 18-38 (SLYLGLLLTFVMGILFSSYFF).

The protein belongs to the PsbL family. As to quaternary structure, PSII is composed of 1 copy each of membrane proteins PsbA, PsbB, PsbC, PsbD, PsbE, PsbF, PsbH, PsbI, PsbJ, PsbK, PsbL, PsbM, PsbT, PsbX, PsbY, Psb30/Ycf12, peripheral proteins PsbO, CyanoQ (PsbQ), PsbU, PsbV and a large number of cofactors. It forms dimeric complexes.

The protein resides in the cellular thylakoid membrane. One of the components of the core complex of photosystem II (PSII). PSII is a light-driven water:plastoquinone oxidoreductase that uses light energy to abstract electrons from H(2)O, generating O(2) and a proton gradient subsequently used for ATP formation. It consists of a core antenna complex that captures photons, and an electron transfer chain that converts photonic excitation into a charge separation. This subunit is found at the monomer-monomer interface and is required for correct PSII assembly and/or dimerization. This Prochlorococcus marinus (strain MIT 9211) protein is Photosystem II reaction center protein L.